We begin with the raw amino-acid sequence, 218 residues long: Hypoxanthine-guanine phosphoribosyltransferase (218 aa).

Ala2 is subject to N-acetylalanine. GMP is bound at residue Lys69. Residue Lys103 is modified to N6-acetyllysine. A Glycyl lysine isopeptide (Lys-Gly) (interchain with G-Cter in SUMO1); alternate cross-link involves residue Lys115. A Glycyl lysine isopeptide (Lys-Gly) (interchain with G-Cter in SUMO2); alternate cross-link involves residue Lys115. Residues 134 to 142 (EDIIDTGKT), Lys166, 186 to 188 (KFV), and Asp194 contribute to the GMP site. Catalysis depends on Asp138, which acts as the Proton acceptor. Thr142 carries the phosphothreonine modification. Position 194 (Asp194) interacts with Mg(2+).

This sequence belongs to the purine/pyrimidine phosphoribosyltransferase family. In terms of assembly, homotetramer. Mg(2+) serves as cofactor.

Its subcellular location is the cytoplasm. It catalyses the reaction IMP + diphosphate = hypoxanthine + 5-phospho-alpha-D-ribose 1-diphosphate. The enzyme catalyses GMP + diphosphate = guanine + 5-phospho-alpha-D-ribose 1-diphosphate. The protein operates within purine metabolism; IMP biosynthesis via salvage pathway; IMP from hypoxanthine: step 1/1. Converts guanine to guanosine monophosphate, and hypoxanthine to inosine monophosphate. Transfers the 5-phosphoribosyl group from 5-phosphoribosylpyrophosphate onto the purine. Plays a central role in the generation of purine nucleotides through the purine salvage pathway. This is Hypoxanthine-guanine phosphoribosyltransferase (HPRT1) from Sus scrofa (Pig).